The primary structure comprises 246 residues: Small ribosomal subunit protein uS2 (246 aa).

The protein belongs to the universal ribosomal protein uS2 family.

In Chromohalobacter salexigens (strain ATCC BAA-138 / DSM 3043 / CIP 106854 / NCIMB 13768 / 1H11), this protein is Small ribosomal subunit protein uS2.